The chain runs to 97 residues: Co-chaperonin GroES (97 aa).

This sequence belongs to the GroES chaperonin family. In terms of assembly, heptamer of 7 subunits arranged in a ring. Interacts with the chaperonin GroEL.

The protein resides in the cytoplasm. Its function is as follows. Together with the chaperonin GroEL, plays an essential role in assisting protein folding. The GroEL-GroES system forms a nano-cage that allows encapsulation of the non-native substrate proteins and provides a physical environment optimized to promote and accelerate protein folding. GroES binds to the apical surface of the GroEL ring, thereby capping the opening of the GroEL channel. The chain is Co-chaperonin GroES from Buchnera aphidicola subsp. Baizongia pistaciae (strain Bp).